A 266-amino-acid chain; its full sequence is GTP-binding protein Rhes (266 aa).

Glycine 26–serine 33 lines the GTP pocket. The Effector region signature appears at tyrosine 48–histidine 56. GTP contacts are provided by residues aspartate 73–asparagine 77 and asparagine 140–aspartate 143. Positions methionine 189 to alanine 235 are interaction with GNB1, GNB2 and GNB3. At cysteine 263 the chain carries Cysteine methyl ester. Cysteine 263 carries the S-farnesyl cysteine lipid modification. A propeptide spans serine 264 to glutamine 266 (removed in mature form).

It belongs to the small GTPase superfamily. RasD family. As to quaternary structure, monomer (Potential). Interacts with PIK3CA and UBE2I. Interacts with GNB1, GNB2 and GNB3. In terms of processing, farnesylated. Farnesylation is required for membrane targeting. As to expression, highly expressed in brain; prominently in the striatum and weakly in kidney, thyroid, lung, heart and testis. Not expressed in liver. Expressed in pancreatic cell lines and in a embryonic stem cell line.

The protein localises to the cell membrane. Its function is as follows. GTPase signaling protein that binds to and hydrolyzes GTP. Regulates signaling pathways involving G-proteins-coupled receptor and heterotrimeric proteins such as GNB1, GNB2 and GNB3. May be involved in selected striatal competencies, mainly locomotor activity and motor coordination. The chain is GTP-binding protein Rhes (Rasd2) from Mus musculus (Mouse).